Reading from the N-terminus, the 125-residue chain is Transposase for transposon Tn554 (125 aa).

Its function is as follows. One of three proteins encoded by transposon Tn554 required for its transposition. This chain is Transposase for transposon Tn554 (tnpC1), found in Staphylococcus aureus (strain Mu50 / ATCC 700699).